We begin with the raw amino-acid sequence, 120 residues long: uncharacterized protein (120 aa).

The helical transmembrane segment at 8–28 (LIVKWFVGLMLIMMMVAVSLF) threads the bilayer.

The protein localises to the membrane. This is an uncharacterized protein from Bacillus anthracis.